A 307-amino-acid polypeptide reads, in one-letter code: Follistatin-related protein 1 (307 aa).

The first 19 residues, 1-19 (MMWRRWLALALVAVAWVHA), serve as a signal peptide directing secretion. Positions 29-52 (ICANVFCGAGRECAVTEKGEPTCL) constitute a Follistatin-like domain. 5 disulfides stabilise this stretch: Cys30–Cys41, Cys35–Cys51, Cys53–Cys83, Cys57–Cys76, and Cys65–Cys97. Residues 47 to 99 (GEPTCLCIEQCKPHKRPVCGSNGKTYLNHCELHRDACLTGSKIQVDYDGHCKE) enclose the Kazal-like domain. Residue Asn143 is glycosylated (N-linked (GlcNAc...) asparagine). The 35-residue stretch at 143-177 (NYSEILDKYFKNFDNGDSRLDSSEFLKFVEQNETA) folds into the EF-hand 1 domain. Ser164 is subject to Phosphoserine. Asn174 and Asn179 each carry an N-linked (GlcNAc...) asparagine glycan. Positions 192–227 (LRGLCVDALIELSDENADWKLSFQEFLKCLNPSFNP) constitute an EF-hand 2 domain. The VWFC domain occupies 232–286 (CALEDETYADGAETEVDCNRCVCACGNWVCTAMTCDGKNQKGAQTQAEEEMTRYV).

As to quaternary structure, homodimer. Interacts with SCN10A. Interacts with DIP2A; DIP2A may act as a cell surface receptor for FSTL1. Interacts with BMP4. Interacts with CD14; this interaction promotes TL4-mediated signaling cascade.

It is found in the secreted. In terms of biological role, secreted glycoprotein that is involved in various physiological processes, such as angiogenesis, regulation of the immune response, cell proliferation and differentiation. Plays a role in the development of the central nervous system, skeletal system, lungs, and ureter. Promotes endothelial cell survival, migration and differentiation into network structures in an AKT-dependent manner. Also promotes survival of cardiac myocytes. Initiates various signaling cascades by activating different receptors on the cell surface such as DIP2A, TLR4 or BMP receptors. The polypeptide is Follistatin-related protein 1 (FSTL1) (Bos taurus (Bovine)).